Reading from the N-terminus, the 62-residue chain is Small ribosomal subunit protein eS31 (62 aa).

Zn(2+) contacts are provided by C29, C32, C48, and C51. The C4-type zinc-finger motif lies at 29-51 (CPRCGSFMAFHKWPVPRWHCGKC).

It belongs to the eukaryotic ribosomal protein eS31 family. Part of the 30S ribosomal subunit. The cofactor is Zn(2+).

The chain is Small ribosomal subunit protein eS31 from Hyperthermus butylicus (strain DSM 5456 / JCM 9403 / PLM1-5).